The sequence spans 257 residues: Isoprenyl transferase 1 (257 aa).

Residue D37 is part of the active site. D37 contacts Mg(2+). Substrate is bound by residues 38–41, W42, H54, and 82–84; these read GNRR and STD. The Proton acceptor role is filled by N85. Substrate is bound by residues F86, R88, R206, and 212–214; that span reads RLS. Residue E225 coordinates Mg(2+).

Belongs to the UPP synthase family. In terms of assembly, homodimer. Mg(2+) is required as a cofactor.

Catalyzes the condensation of isopentenyl diphosphate (IPP) with allylic pyrophosphates generating different type of terpenoids. This chain is Isoprenyl transferase 1, found in Streptomyces avermitilis (strain ATCC 31267 / DSM 46492 / JCM 5070 / NBRC 14893 / NCIMB 12804 / NRRL 8165 / MA-4680).